The primary structure comprises 251 residues: 5'-nucleotidase SurE (251 aa).

4 residues coordinate a divalent metal cation: D8, D9, S40, and N95.

The protein belongs to the SurE nucleotidase family. A divalent metal cation serves as cofactor.

The protein resides in the cytoplasm. The catalysed reaction is a ribonucleoside 5'-phosphate + H2O = a ribonucleoside + phosphate. Its function is as follows. Nucleotidase that shows phosphatase activity on nucleoside 5'-monophosphates. The sequence is that of 5'-nucleotidase SurE from Lawsonia intracellularis (strain PHE/MN1-00).